Consider the following 205-residue polypeptide: GTP-binding protein rho3 (205 aa).

20–27 is a GTP binding site; that stretch reads GDGAAGKT. An Effector region motif is present at residues 42 to 50; sequence YEPTIFENY. GTP-binding positions include 67–71 and 125–128; these read DTAGQ and LKCD. Cys-202 carries the cysteine methyl ester modification. The S-geranylgeranyl cysteine moiety is linked to residue Cys-202. Positions 203–205 are cleaved as a propeptide — removed in mature form; sequence IIA.

It belongs to the small GTPase superfamily. Rho family. As to quaternary structure, interacts with for3. Palmitoylated by the erf2-erf4 complex.

The protein resides in the cell membrane. Involved in controlling cell shape and septation. Regulates cell separation by modulating the function of the exocyst complex. Involved in post-Golgi vesicle transport. Involved in driving sexual development in a palmitoylation-dependent manner. This chain is GTP-binding protein rho3 (rho3), found in Schizosaccharomyces pombe (strain 972 / ATCC 24843) (Fission yeast).